A 173-amino-acid chain; its full sequence is NADH-ubiquinone oxidoreductase chain 6 (173 aa).

A run of 6 helical transmembrane segments spans residues 1-21 (MTYFVLFLGLCFVLGGLAVAS), 27-47 (YGVVGLVLASVAGCGWLLSLG), 48-68 (VSFVSLVLFMVYLGGMLVVFV), 85-105 (WGVVGYGVGFVVVLVAGLIVG), 106-126 (GSIGSLDFGVVTVDSVGMFSV), and 139-159 (CGVGMLLVAGWGLLLTLFVVL).

The protein belongs to the complex I subunit 6 family.

Its subcellular location is the mitochondrion membrane. It carries out the reaction a ubiquinone + NADH + 5 H(+)(in) = a ubiquinol + NAD(+) + 4 H(+)(out). Functionally, core subunit of the mitochondrial membrane respiratory chain NADH dehydrogenase (Complex I) that is believed to belong to the minimal assembly required for catalysis. Complex I functions in the transfer of electrons from NADH to the respiratory chain. The immediate electron acceptor for the enzyme is believed to be ubiquinone. This Aethia psittacula (Parakeet auklet) protein is NADH-ubiquinone oxidoreductase chain 6 (MT-ND6).